Consider the following 472-residue polypeptide: Protein nucleotidyltransferase YdiU (472 aa).

Positions 86, 88, 89, 109, 121, 122, 172, and 179 each coordinate ATP. The Proton acceptor role is filled by Asp-244. Residues Asn-245 and Asp-254 each contribute to the Mg(2+) site. Residue Asp-254 participates in ATP binding.

Belongs to the SELO family. Requires Mg(2+) as cofactor. Mn(2+) is required as a cofactor.

The catalysed reaction is L-seryl-[protein] + ATP = 3-O-(5'-adenylyl)-L-seryl-[protein] + diphosphate. It catalyses the reaction L-threonyl-[protein] + ATP = 3-O-(5'-adenylyl)-L-threonyl-[protein] + diphosphate. The enzyme catalyses L-tyrosyl-[protein] + ATP = O-(5'-adenylyl)-L-tyrosyl-[protein] + diphosphate. It carries out the reaction L-histidyl-[protein] + UTP = N(tele)-(5'-uridylyl)-L-histidyl-[protein] + diphosphate. The catalysed reaction is L-seryl-[protein] + UTP = O-(5'-uridylyl)-L-seryl-[protein] + diphosphate. It catalyses the reaction L-tyrosyl-[protein] + UTP = O-(5'-uridylyl)-L-tyrosyl-[protein] + diphosphate. Its function is as follows. Nucleotidyltransferase involved in the post-translational modification of proteins. It can catalyze the addition of adenosine monophosphate (AMP) or uridine monophosphate (UMP) to a protein, resulting in modifications known as AMPylation and UMPylation. The sequence is that of Protein nucleotidyltransferase YdiU from Ruegeria pomeroyi (strain ATCC 700808 / DSM 15171 / DSS-3) (Silicibacter pomeroyi).